The chain runs to 219 residues: Probable glutathione S-transferase MSR-1 (219 aa).

One can recognise a GST N-terminal domain in the interval 4–83 (NNVVLLDFSG…YIDEVWHEKC (80 aa)). Glutathione-binding positions include Ser-14, Lys-41, Ile-55, and 67–68 (ES). In terms of domain architecture, GST C-terminal spans 89-208 (DPYQRSQARF…LPHPHKIYDF (120 aa)).

This sequence belongs to the GST superfamily. HSP26 family.

It carries out the reaction RX + glutathione = an S-substituted glutathione + a halide anion + H(+). May play an important role in hormonal and growth regulatory responses. The protein is Probable glutathione S-transferase MSR-1 (MSR-1) of Nicotiana plumbaginifolia (Leadwort-leaved tobacco).